The primary structure comprises 621 residues: tRNA uridine 5-carboxymethylaminomethyl modification enzyme MnmG (621 aa).

11–16 (GGGHAG) lines the FAD pocket. 270–284 (GPRYCPSIEDKINRF) contributes to the NAD(+) binding site.

Belongs to the MnmG family. In terms of assembly, homodimer. Heterotetramer of two MnmE and two MnmG subunits. The cofactor is FAD.

It is found in the cytoplasm. In terms of biological role, NAD-binding protein involved in the addition of a carboxymethylaminomethyl (cmnm) group at the wobble position (U34) of certain tRNAs, forming tRNA-cmnm(5)s(2)U34. The chain is tRNA uridine 5-carboxymethylaminomethyl modification enzyme MnmG from Helicobacter pylori (strain Shi470).